The primary structure comprises 196 residues: Phosphoheptose isomerase (196 aa).

Residues 34-192 (MVQCLLGGNK…CEIIDTTLFP (159 aa)) form the SIS domain. Residue 49–51 (NGG) coordinates substrate. Residues H58 and Q62 each coordinate Zn(2+). Substrate-binding positions include Q62, 91–92 (ND), 117–119 (STS), S122, and Q172. Zn(2+)-binding residues include Q172 and H180.

It belongs to the SIS family. GmhA subfamily. In terms of assembly, homotetramer. Zn(2+) serves as cofactor.

It localises to the cytoplasm. It catalyses the reaction 2 D-sedoheptulose 7-phosphate = D-glycero-alpha-D-manno-heptose 7-phosphate + D-glycero-beta-D-manno-heptose 7-phosphate. It functions in the pathway carbohydrate biosynthesis; D-glycero-D-manno-heptose 7-phosphate biosynthesis; D-glycero-alpha-D-manno-heptose 7-phosphate and D-glycero-beta-D-manno-heptose 7-phosphate from sedoheptulose 7-phosphate: step 1/1. Functionally, catalyzes the isomerization of sedoheptulose 7-phosphate in D-glycero-D-manno-heptose 7-phosphate. This Colwellia psychrerythraea (strain 34H / ATCC BAA-681) (Vibrio psychroerythus) protein is Phosphoheptose isomerase.